The sequence spans 127 residues: uncharacterized protein (127 aa).

This is an uncharacterized protein from Bacillus subtilis (strain 168).